The sequence spans 143 residues: Large ribosomal subunit protein uL13 (143 aa).

This sequence belongs to the universal ribosomal protein uL13 family. Part of the 50S ribosomal subunit.

Functionally, this protein is one of the early assembly proteins of the 50S ribosomal subunit, although it is not seen to bind rRNA by itself. It is important during the early stages of 50S assembly. The sequence is that of Large ribosomal subunit protein uL13 from Rubrobacter xylanophilus (strain DSM 9941 / JCM 11954 / NBRC 16129 / PRD-1).